A 309-amino-acid polypeptide reads, in one-letter code: Methionyl-tRNA formyltransferase (309 aa).

Ser109–Pro112 lines the (6S)-5,6,7,8-tetrahydrofolate pocket.

This sequence belongs to the Fmt family.

It catalyses the reaction L-methionyl-tRNA(fMet) + (6R)-10-formyltetrahydrofolate = N-formyl-L-methionyl-tRNA(fMet) + (6S)-5,6,7,8-tetrahydrofolate + H(+). Functionally, attaches a formyl group to the free amino group of methionyl-tRNA(fMet). The formyl group appears to play a dual role in the initiator identity of N-formylmethionyl-tRNA by promoting its recognition by IF2 and preventing the misappropriation of this tRNA by the elongation apparatus. The polypeptide is Methionyl-tRNA formyltransferase (Chloroflexus aggregans (strain MD-66 / DSM 9485)).